Here is a 150-residue protein sequence, read N- to C-terminus: Mediator of RNA polymerase II transcription subunit 22a (150 aa).

The stretch at 99-127 (SLNDHVEQRIAEFDQEAEKTNRLLARIAD) forms a coiled coil.

It belongs to the Mediator complex subunit 22 family. As to quaternary structure, component of the Mediator complex.

It is found in the nucleus. Its function is as follows. Component of the Mediator complex, a coactivator involved in the regulated transcription of nearly all RNA polymerase II-dependent genes. Mediator functions as a bridge to convey information from gene-specific regulatory proteins to the basal RNA polymerase II transcription machinery. The Mediator complex, having a compact conformation in its free form, is recruited to promoters by direct interactions with regulatory proteins and serves for the assembly of a functional preinitiation complex with RNA polymerase II and the general transcription factors. In Arabidopsis thaliana (Mouse-ear cress), this protein is Mediator of RNA polymerase II transcription subunit 22a (MED22A).